Here is an 83-residue protein sequence, read N- to C-terminus: uncharacterized protein (83 aa).

This is an uncharacterized protein from Archaeoglobus fulgidus (strain ATCC 49558 / DSM 4304 / JCM 9628 / NBRC 100126 / VC-16).